A 241-amino-acid chain; its full sequence is Ion-translocating oxidoreductase complex subunit E (241 aa).

6 helical membrane-spanning segments follow: residues 22–42 (LLGLCPVLAITVNAINAIGLG), 69–89 (IPIYIIIISSVVSSIDLVIKA), 91–111 (AFNLYQSLGIFIPLIITNCIV), 124–144 (VLVSILDGLSIGLGSTLTMFL), 157–177 (LFFGIEHVLGESFRFLYIEVL), and 182–202 (VFLLFAFPSGAFMILGIVLAG).

It belongs to the NqrDE/RnfAE family. As to quaternary structure, the complex is composed of six subunits: RnfA, RnfB, RnfC, RnfD, RnfE and RnfG.

Its subcellular location is the cell inner membrane. In terms of biological role, part of a membrane-bound complex that couples electron transfer with translocation of ions across the membrane. The protein is Ion-translocating oxidoreductase complex subunit E of Buchnera aphidicola subsp. Baizongia pistaciae (strain Bp).